The primary structure comprises 174 residues: 3-hydroxydecanoyl-[acyl-carrier-protein] dehydratase (174 aa).

The active site involves His73.

This sequence belongs to the thioester dehydratase family. FabA subfamily. Homodimer.

The protein resides in the cytoplasm. It carries out the reaction a (3R)-hydroxyacyl-[ACP] = a (2E)-enoyl-[ACP] + H2O. The catalysed reaction is (3R)-hydroxydecanoyl-[ACP] = (2E)-decenoyl-[ACP] + H2O. It catalyses the reaction (2E)-decenoyl-[ACP] = (3Z)-decenoyl-[ACP]. It participates in lipid metabolism; fatty acid biosynthesis. Necessary for the introduction of cis unsaturation into fatty acids. Catalyzes the dehydration of (3R)-3-hydroxydecanoyl-ACP to E-(2)-decenoyl-ACP and then its isomerization to Z-(3)-decenoyl-ACP. Can catalyze the dehydratase reaction for beta-hydroxyacyl-ACPs with saturated chain lengths up to 16:0, being most active on intermediate chain length. The chain is 3-hydroxydecanoyl-[acyl-carrier-protein] dehydratase from Saccharophagus degradans (strain 2-40 / ATCC 43961 / DSM 17024).